We begin with the raw amino-acid sequence, 35 residues long: Flavodoxin (35 aa).

The Flavodoxin-like domain occupies 4 to 35 (IGLFYGTZTGKTESVAEIIDEFGDEVVTLDID).

It belongs to the flavodoxin family. FMN serves as cofactor.

Its function is as follows. Low-potential electron donor to a number of redox enzymes. This is Flavodoxin from Nostoc sp. (strain MAC).